Consider the following 221-residue polypeptide: MLNRMYRYALLATVALALSGCILPGEQKPAPVEEAQPGTQQPTQPVPPPTQPVPTVPSVPSIPAQPGPIEHQPENATPEPKARTYDWNSAMAPMVGKMLQADGVNAGSVLLVDSVNNRTNGSLQTGPATEALRGALANNAKFTLVSAQQLSMAKQQLGLSPQDSLGSRSKAIGIARNVGAQYVLYANASGNVNAPTLQMQLMLVQTGEIIWSGKGAVQQTQ.

Positions 1 to 20 (MLNRMYRYALLATVALALSG) are cleaved as a signal peptide. The N-palmitoyl cysteine moiety is linked to residue C21. C21 is lipidated: S-diacylglycerol cysteine. The interval 29–82 (PAPVEEAQPGTQQPTQPVPPPTQPVPTVPSVPSIPAQPGPIEHQPENATPEPKA) is disordered. Over residues 44–57 (QPVPPPTQPVPTVP) the composition is skewed to pro residues.

The protein belongs to the LpoB family. In terms of assembly, interacts with PBP1b.

The protein localises to the cell outer membrane. In terms of biological role, regulator of peptidoglycan synthesis that is essential for the function of penicillin-binding protein 1B (PBP1b). In Cronobacter turicensis (strain DSM 18703 / CCUG 55852 / LMG 23827 / z3032), this protein is Penicillin-binding protein activator LpoB.